The chain runs to 380 residues: Shedu protein SduA (380 aa).

In terms of biological role, only component of antiviral defense system Shedu. Expression of Shedu in B.subtilis (strain BEST7003) confers resistance to phages phi105, phi29, rho14 and to a lesser extent to SPP1. May be an endonuclease. This is Shedu protein SduA from Bacillus cereus (strain B4264).